The primary structure comprises 430 residues: Maltoporin (430 aa).

A signal peptide spans 1 to 23; the sequence is MNNKKTLLAVAISGMMFATSAAA.

Belongs to the porin LamB (TC 1.B.3) family. Homotrimer formed of three 18-stranded antiparallel beta-barrels, containing three independent channels.

It is found in the cell outer membrane. The enzyme catalyses beta-maltose(in) = beta-maltose(out). Involved in the transport of maltose and maltodextrins. The chain is Maltoporin from Actinobacillus succinogenes (strain ATCC 55618 / DSM 22257 / CCUG 43843 / 130Z).